The sequence spans 347 residues: Glycerol-3-phosphate dehydrogenase [NAD(P)+] (347 aa).

Trp-20, Arg-39, and Lys-118 together coordinate NADPH. Residues Lys-118, Gly-152, and Ser-154 each contribute to the sn-glycerol 3-phosphate site. Ala-156 provides a ligand contact to NADPH. The sn-glycerol 3-phosphate site is built by Lys-207, Asp-260, Ser-270, Arg-271, and Asn-272. Lys-207 serves as the catalytic Proton acceptor. Arg-271 contacts NADPH. NADPH contacts are provided by Val-295 and Glu-297.

It belongs to the NAD-dependent glycerol-3-phosphate dehydrogenase family.

The protein localises to the cytoplasm. It carries out the reaction sn-glycerol 3-phosphate + NAD(+) = dihydroxyacetone phosphate + NADH + H(+). The catalysed reaction is sn-glycerol 3-phosphate + NADP(+) = dihydroxyacetone phosphate + NADPH + H(+). Its pathway is membrane lipid metabolism; glycerophospholipid metabolism. Its function is as follows. Catalyzes the reduction of the glycolytic intermediate dihydroxyacetone phosphate (DHAP) to sn-glycerol 3-phosphate (G3P), the key precursor for phospholipid synthesis. The sequence is that of Glycerol-3-phosphate dehydrogenase [NAD(P)+] from Cupriavidus pinatubonensis (strain JMP 134 / LMG 1197) (Cupriavidus necator (strain JMP 134)).